We begin with the raw amino-acid sequence, 249 residues long: Triosephosphate isomerase (249 aa).

9–11 (NWK) contacts substrate. H94 functions as the Electrophile in the catalytic mechanism. Residue E166 is the Proton acceptor of the active site. Substrate-binding positions include G172 and 232–233 (GG).

The protein belongs to the triosephosphate isomerase family. As to quaternary structure, homodimer.

It localises to the cytoplasm. It catalyses the reaction D-glyceraldehyde 3-phosphate = dihydroxyacetone phosphate. It participates in carbohydrate biosynthesis; gluconeogenesis. Its pathway is carbohydrate degradation; glycolysis; D-glyceraldehyde 3-phosphate from glycerone phosphate: step 1/1. Involved in the gluconeogenesis. Catalyzes stereospecifically the conversion of dihydroxyacetone phosphate (DHAP) to D-glyceraldehyde-3-phosphate (G3P). The protein is Triosephosphate isomerase of Xylella fastidiosa (strain 9a5c).